A 288-amino-acid polypeptide reads, in one-letter code: Ion-translocating oxidoreductase complex subunit D (288 aa).

The next 9 helical transmembrane spans lie at 26-46 (IVALLPISAAAVYFFGFAALG), 47-67 (NIIASILGAVGIEFVIQKAFN), 80-100 (LGLLLALICPPTLPAWMIFIG), 101-121 (GAFAVGVGKHAFGGIGSYTFH), 126-146 (AWVFLSLAWAQDMLPGTIPIL), 159-179 (GFLTDVSPILVLLAGVILILV), 200-220 (VLGDPLAYVVSGTFLLGVFFI), 235-255 (IVYGILCGFLTVIYGYFSGNY), and 256-276 (VWGTLYALLLSNAVAPFIELK).

Belongs to the NqrB/RnfD family. The Rnf complex is probably composed of eight subunits, including RnfA, RnfB, RnfC, RnfD, RnfE and RnfG. It depends on FMN as a cofactor.

The protein localises to the cell membrane. Part of a membrane-bound complex that couples electron transfer with translocation of ions across the membrane. Catalyzes Na(+) transport, most probably coupled to electron transfer from reduced ferredoxin to methanophenazine and heterodisulfide reductase. Involved in heterodisulfide reduction during methanogenesis from acetate. This is Ion-translocating oxidoreductase complex subunit D from Methanosarcina acetivorans (strain ATCC 35395 / DSM 2834 / JCM 12185 / C2A).